Consider the following 491-residue polypeptide: Cytochrome P450 2H2 (491 aa).

Cysteine 436 lines the heme pocket.

Belongs to the cytochrome P450 family. Heme serves as cofactor.

Its subcellular location is the endoplasmic reticulum membrane. The protein resides in the microsome membrane. The catalysed reaction is an organic molecule + reduced [NADPH--hemoprotein reductase] + O2 = an alcohol + oxidized [NADPH--hemoprotein reductase] + H2O + H(+). Its function is as follows. Cytochromes P450 are a group of heme-thiolate monooxygenases. In liver microsomes, this enzyme is involved in an NADPH-dependent electron transport pathway. It oxidizes a variety of structurally unrelated compounds, including steroids, fatty acids, and xenobiotics. In Gallus gallus (Chicken), this protein is Cytochrome P450 2H2 (CYP2H2).